Reading from the N-terminus, the 272-residue chain is Cell division protein ZipA (272 aa).

The Periplasmic portion of the chain corresponds to 1 to 4 (METH). Residues 5-25 (ILFFILAGLLIAVLIGYSIWS) form a helical membrane-spanning segment. The Cytoplasmic segment spans residues 26 to 272 (ARREKSRIFS…RQNYLLRVAN (247 aa)).

It belongs to the ZipA family. Interacts with FtsZ via their C-terminal domains.

It is found in the cell inner membrane. In terms of biological role, essential cell division protein that stabilizes the FtsZ protofilaments by cross-linking them and that serves as a cytoplasmic membrane anchor for the Z ring. Also required for the recruitment to the septal ring of downstream cell division proteins. The protein is Cell division protein ZipA of Glaesserella parasuis serovar 5 (strain SH0165) (Haemophilus parasuis).